A 63-amino-acid polypeptide reads, in one-letter code: Cecropin-C (63 aa).

Positions methionine 1–alanine 23 are cleaved as a signal peptide. Arginine amide is present on arginine 62.

The protein belongs to the cecropin family.

The protein resides in the secreted. In terms of biological role, cecropins have lytic and antibacterial activity against several Gram-positive and Gram-negative bacteria. The polypeptide is Cecropin-C (CecC) (Drosophila mauritiana (Fruit fly)).